The chain runs to 189 residues: MDTEYQQVNKPWNELYKEVTLGNKLTVNVGMEEEEVLLLPSNFLTKVRVSMSGGYITVRRVRIRIIPLVSRKAGVSGKLYLRDISDTTGQKLHCTELLDLGKEIRLTMPHLDFSVSAKSDVPIAFGFEELVSPFREGRELFSVSLRWQLGLSAQCYSLPPANVKVMYQEDALKALKPSKKKASRTDSSV.

It belongs to the tombusvirus/aureusvirus movement protein p22 family.

The protein localises to the host membrane. In terms of biological role, transports viral genome to neighboring plant cells directly through plasmosdesmata, without any budding. The movement protein allows efficient cell to cell propagation, by bypassing the host cell wall barrier. In Cymbidium ringspot virus (CymRSV), this protein is Movement protein.